The sequence spans 1396 residues: DNA-directed RNA polymerase subunit beta' (1396 aa).

Zn(2+) contacts are provided by cysteine 70, cysteine 72, cysteine 85, and cysteine 88. Mg(2+)-binding residues include aspartate 460, aspartate 462, and aspartate 464. Zn(2+) contacts are provided by cysteine 814, cysteine 888, cysteine 895, and cysteine 898.

This sequence belongs to the RNA polymerase beta' chain family. As to quaternary structure, the RNAP catalytic core consists of 2 alpha, 1 beta, 1 beta' and 1 omega subunit. When a sigma factor is associated with the core the holoenzyme is formed, which can initiate transcription. Mg(2+) serves as cofactor. The cofactor is Zn(2+).

The enzyme catalyses RNA(n) + a ribonucleoside 5'-triphosphate = RNA(n+1) + diphosphate. Functionally, DNA-dependent RNA polymerase catalyzes the transcription of DNA into RNA using the four ribonucleoside triphosphates as substrates. The polypeptide is DNA-directed RNA polymerase subunit beta' (Chromobacterium violaceum (strain ATCC 12472 / DSM 30191 / JCM 1249 / CCUG 213 / NBRC 12614 / NCIMB 9131 / NCTC 9757 / MK)).